Consider the following 56-residue polypeptide: Large ribosomal subunit protein eL40 (56 aa).

This sequence belongs to the eukaryotic ribosomal protein eL40 family.

The polypeptide is Large ribosomal subunit protein eL40 (Sulfurisphaera tokodaii (strain DSM 16993 / JCM 10545 / NBRC 100140 / 7) (Sulfolobus tokodaii)).